Here is a 664-residue protein sequence, read N- to C-terminus: Transketolase 1 (664 aa).

His-26 contributes to the substrate binding site. Thiamine diphosphate-binding positions include His-66 and 114-116 (GPL). Asp-155 lines the Mg(2+) pocket. Gly-156 and Asn-185 together coordinate thiamine diphosphate. The Mg(2+) site is built by Asn-185 and Ile-187. Substrate contacts are provided by His-260, Arg-357, and Ser-384. His-260 provides a ligand contact to thiamine diphosphate. The active-site Proton donor is Glu-411. A thiamine diphosphate-binding site is contributed by Phe-437. Residues His-461, Asp-469, and Arg-520 each contribute to the substrate site.

Belongs to the transketolase family. As to quaternary structure, homodimer. Mg(2+) serves as cofactor. Requires Ca(2+) as cofactor. It depends on Mn(2+) as a cofactor. The cofactor is Co(2+). Thiamine diphosphate is required as a cofactor.

The enzyme catalyses D-sedoheptulose 7-phosphate + D-glyceraldehyde 3-phosphate = aldehydo-D-ribose 5-phosphate + D-xylulose 5-phosphate. Functionally, catalyzes the transfer of a two-carbon ketol group from a ketose donor to an aldose acceptor, via a covalent intermediate with the cofactor thiamine pyrophosphate. This chain is Transketolase 1 (tkt1), found in Vibrio vulnificus (strain CMCP6).